The primary structure comprises 196 residues: Protein GrpE (196 aa).

Residues 1 to 41 (MSSKEQKTPEGQAPEEIITEQHDDVEAVEPEVSAEQVDPRD) form a disordered region.

This sequence belongs to the GrpE family. Homodimer.

Its subcellular location is the cytoplasm. Functionally, participates actively in the response to hyperosmotic and heat shock by preventing the aggregation of stress-denatured proteins, in association with DnaK and GrpE. It is the nucleotide exchange factor for DnaK and may function as a thermosensor. Unfolded proteins bind initially to DnaJ; upon interaction with the DnaJ-bound protein, DnaK hydrolyzes its bound ATP, resulting in the formation of a stable complex. GrpE releases ADP from DnaK; ATP binding to DnaK triggers the release of the substrate protein, thus completing the reaction cycle. Several rounds of ATP-dependent interactions between DnaJ, DnaK and GrpE are required for fully efficient folding. The protein is Protein GrpE of Klebsiella pneumoniae (strain 342).